We begin with the raw amino-acid sequence, 492 residues long: Signal transduction histidine-protein kinase/phosphatase MprB (492 aa).

Topologically, residues 1–27 (MAFPPNSWRPTGPLPTSSLSLRWRVMM) are cytoplasmic. The helical transmembrane segment at 28 to 48 (LAMSMVALVVVLMAVAVYAVV) threads the bilayer. The Extracellular segment spans residues 49 to 165 (SRALYDDLDN…TVQVLRRLGT (117 aa)). A helical transmembrane segment spans residues 166-186 (VLLIVGGIGVAVAAIAGGAVA). Positions 187-239 (RAGLRPVGRLTEAAERVARTDDLRPIPVVGSDELARLTEAFNMMLRALAESRE) constitute an HAMP domain. Topologically, residues 187–492 (RAGLRPVGRL…DRGGHTVATE (306 aa)) are cytoplasmic. Residues 247-467 (DAGHELRTPL…SVHMLLPGQR (221 aa)) form the Histidine kinase domain. H250 bears the Phosphohistidine; by autocatalysis mark. Residues 470–492 (DPGATRSAEGFVDDRGGHTVATE) form a disordered region.

Mg(2+) is required as a cofactor. The cofactor is Mn(2+). In terms of processing, autophosphorylated.

It localises to the cell membrane. It catalyses the reaction ATP + protein L-histidine = ADP + protein N-phospho-L-histidine.. Functionally, member of the two-component regulatory system MprB/MprA which contributes to maintaining a balance among several systems involved in stress resistance and is required for establishment and maintenance of persistent infection in the host. In response to environmental signals MprB acts both as a membrane-associated protein kinase that undergoes autophosphorylation and subsequently transfers the phosphate to MprA, and a protein phosphatase that dephosphorylates phospho-MprA. The protein is Signal transduction histidine-protein kinase/phosphatase MprB (mprB) of Mycolicibacterium smegmatis (strain ATCC 700084 / mc(2)155) (Mycobacterium smegmatis).